A 278-amino-acid polypeptide reads, in one-letter code: Ribosomal RNA small subunit methyltransferase J (278 aa).

Residues glutamate 143–arginine 144 and aspartate 197 contribute to the S-adenosyl-L-methionine site.

Belongs to the methyltransferase superfamily. RsmJ family.

The protein resides in the cytoplasm. It catalyses the reaction guanosine(1516) in 16S rRNA + S-adenosyl-L-methionine = N(2)-methylguanosine(1516) in 16S rRNA + S-adenosyl-L-homocysteine + H(+). Specifically methylates the guanosine in position 1516 of 16S rRNA. The polypeptide is Ribosomal RNA small subunit methyltransferase J (Marinobacter nauticus (strain ATCC 700491 / DSM 11845 / VT8) (Marinobacter aquaeolei)).